Consider the following 510-residue polypeptide: GTPase Der (510 aa).

EngA-type G domains lie at 4–168 (PVVA…AEKM) and 222–395 (IKIA…ACAT). Residues 10–17 (GRPNVGKS), 57–61 (DTGGI), 120–123 (NKTD), 228–235 (GRPNVGKS), 275–279 (DTAGV), and 340–343 (NKWD) each bind GTP. In terms of domain architecture, KH-like spans 396 to 480 (QKMTTSMLTR…PIRLLFQEGN (85 aa)).

Belongs to the TRAFAC class TrmE-Era-EngA-EngB-Septin-like GTPase superfamily. EngA (Der) GTPase family. Associates with the 50S ribosomal subunit.

Its function is as follows. GTPase that plays an essential role in the late steps of ribosome biogenesis. The chain is GTPase Der from Pasteurella multocida (strain Pm70).